A 225-amino-acid polypeptide reads, in one-letter code: Urease accessory protein UreG (225 aa).

Residues 1 to 21 form a disordered region; that stretch reads MHLDHHHESAAAVSADARRPD. Position 33–40 (33–40) interacts with GTP; it reads GPVGSGKT.

It belongs to the SIMIBI class G3E GTPase family. UreG subfamily. Homodimer. UreD, UreF and UreG form a complex that acts as a GTP-hydrolysis-dependent molecular chaperone, activating the urease apoprotein by helping to assemble the nickel containing metallocenter of UreC. The UreE protein probably delivers the nickel.

It is found in the cytoplasm. Its function is as follows. Facilitates the functional incorporation of the urease nickel metallocenter. This process requires GTP hydrolysis, probably effectuated by UreG. The chain is Urease accessory protein UreG from Streptomyces coelicolor (strain ATCC BAA-471 / A3(2) / M145).